The sequence spans 198 residues: Ribonuclease HII (198 aa).

Residues 10-198 (HLVAGVDEVG…PVKRALGLVC (189 aa)) form the RNase H type-2 domain. Asp-16, Glu-17, and Asp-108 together coordinate a divalent metal cation.

The protein belongs to the RNase HII family. Mn(2+) is required as a cofactor. It depends on Mg(2+) as a cofactor.

It is found in the cytoplasm. It carries out the reaction Endonucleolytic cleavage to 5'-phosphomonoester.. Endonuclease that specifically degrades the RNA of RNA-DNA hybrids. In Enterobacter sp. (strain 638), this protein is Ribonuclease HII.